Here is a 407-residue protein sequence, read N- to C-terminus: 4-hydroxy-3-methylbut-2-en-1-yl diphosphate synthase (ferredoxin) (407 aa).

The [4Fe-4S] cluster site is built by Cys-316, Cys-319, Cys-350, and Glu-357.

This sequence belongs to the IspG family. [4Fe-4S] cluster serves as cofactor.

It catalyses the reaction (2E)-4-hydroxy-3-methylbut-2-enyl diphosphate + 2 oxidized [2Fe-2S]-[ferredoxin] + H2O = 2-C-methyl-D-erythritol 2,4-cyclic diphosphate + 2 reduced [2Fe-2S]-[ferredoxin] + H(+). Its pathway is isoprenoid biosynthesis; isopentenyl diphosphate biosynthesis via DXP pathway; isopentenyl diphosphate from 1-deoxy-D-xylulose 5-phosphate: step 5/6. Its function is as follows. Converts 2C-methyl-D-erythritol 2,4-cyclodiphosphate (ME-2,4cPP) into 1-hydroxy-2-methyl-2-(E)-butenyl 4-diphosphate. The chain is 4-hydroxy-3-methylbut-2-en-1-yl diphosphate synthase (ferredoxin) from Prochlorococcus marinus (strain SARG / CCMP1375 / SS120).